The sequence spans 429 residues: U3 small nucleolar RNA-associated protein 18 homolog (429 aa).

WD repeat units follow at residues Arg-117–Arg-156, Thr-295–Asn-336, Asn-345–Asn-386, and Gly-392–Asp-428.

This sequence belongs to the WD repeat UTP18 family.

The protein resides in the nucleus. It localises to the nucleolus. Its function is as follows. Involved in nucleolar processing of pre-18S ribosomal RNA. The sequence is that of U3 small nucleolar RNA-associated protein 18 homolog from Caenorhabditis elegans.